The following is a 616-amino-acid chain: Electron transfer flavoprotein-ubiquinone oxidoreductase, mitochondrial (616 aa).

Residues 1-32 (MLVRLTKLSCPAYHWFHALKIKKCLPLCAPRC) constitute a mitochondrion transit peptide. Residue 70–84 (VVIVGAGPAGLSAAI) participates in FAD binding. Lys-95 carries the N6-acetyllysine modification. Residues 108–129 (IGAHTLSGACLDPAAFKELFPD) lie within the membrane without spanning it. An N6-acetyllysine mark is found at Lys-131 and Lys-222. Positions 304 and 305 each coordinate a ubiquinone. Lys-356 and Lys-415 each carry N6-acetyllysine. Residues 427–446 (TGLHVTEYEDNLKQSWVWKE) lie within the membrane without spanning it. Position 550 is a phosphoserine (Ser-550). Residues Cys-560, Cys-585, Cys-588, and Cys-591 each contribute to the [4Fe-4S] cluster site. Residues 576–605 (FRLQINAQNCVHCKTCDIKDPSQNINWVVP) form the 4Fe-4S ferredoxin-type domain.

It belongs to the ETF-QO/FixC family. In terms of assembly, monomer. [4Fe-4S] cluster serves as cofactor. FAD is required as a cofactor. In terms of processing, acetylation of Lys-95 and Lys-222 is observed in liver mitochondria from fasted mice but not from fed mice.

Its subcellular location is the mitochondrion inner membrane. It carries out the reaction a ubiquinone + reduced [electron-transfer flavoprotein] = a ubiquinol + oxidized [electron-transfer flavoprotein] + H(+). In terms of biological role, accepts electrons from ETF and reduces ubiquinone. The protein is Electron transfer flavoprotein-ubiquinone oxidoreductase, mitochondrial (Etfdh) of Mus musculus (Mouse).